Here is a 122-residue protein sequence, read N- to C-terminus: Large ribosomal subunit protein uL14 (122 aa).

The protein belongs to the universal ribosomal protein uL14 family. Part of the 50S ribosomal subunit. Forms a cluster with proteins L3 and L19. In the 70S ribosome, L14 and L19 interact and together make contacts with the 16S rRNA in bridges B5 and B8.

Its function is as follows. Binds to 23S rRNA. Forms part of two intersubunit bridges in the 70S ribosome. This chain is Large ribosomal subunit protein uL14, found in Micrococcus luteus (strain ATCC 4698 / DSM 20030 / JCM 1464 / CCM 169 / CCUG 5858 / IAM 1056 / NBRC 3333 / NCIMB 9278 / NCTC 2665 / VKM Ac-2230) (Micrococcus lysodeikticus).